The following is a 664-amino-acid chain: Acid beta-fructofuranosidase 4, vacuolar (664 aa).

Over 1–43 the chain is Cytoplasmic; it reads MASSDALLPISAREEEPLCPYTRLPMADPNQETHGPRRRRPFK. The propeptide at 1-108 is removed in mature form; that stretch reads MASSDALLPI…WKLSGDRNTP (108 aa). 2 short sequence motifs (critical for endoplasmic reticulum export) span residues 7-8 and 9-10; these read LL and PI. A Critical for trafficking from the trans-Golgi network to the prevacuolar compartment and from the prevacuolar compartment to the central vacuole motif is present at residues 14-16; that stretch reads EEE. A helical; Signal-anchor for type II membrane protein transmembrane segment spans residues 44–64; it reads GLLAVSFGLLFIAFYVALIAT. Over 65–664 the chain is Lumenal; sequence HDGSRSNDEG…DEAVRALSRT (600 aa). N-linked (GlcNAc...) asparagine glycosylation occurs at Asn113. Substrate-binding positions include 132–135, Gln151, Trp159, 194–195, and 258–259; these read WMND, WT, and RD. The active site involves Asp135. Asn280 carries an N-linked (GlcNAc...) (complex) asparagine glycan. Glu313 and Asp346 together coordinate substrate. Residues Asn362 and Asn498 are each glycosylated (N-linked (GlcNAc...) asparagine). A disulfide bridge links Cys510 with Cys558.

The protein belongs to the glycosyl hydrolase 32 family. In terms of assembly, may be present in two forms, a 70 kDa monomer and a heterodimer of the 30 kDa and 38 kDa subunits. The ratio of the levels of the two forms within cells appears to be regulated developmentally. As to expression, mostly expressed in stems, roots and flowers, and, to a lower extent, in mature leaves.

The protein localises to the vacuole. The protein resides in the endoplasmic reticulum membrane. It is found in the golgi apparatus membrane. It localises to the golgi apparatus. Its subcellular location is the trans-Golgi network membrane. The protein localises to the prevacuolar compartment membrane. The protein resides in the vacuole membrane. It is found in the vacuole lumen. The enzyme catalyses Hydrolysis of terminal non-reducing beta-D-fructofuranoside residues in beta-D-fructofuranosides.. The protein operates within glycan biosynthesis; sucrose metabolism. Inhibited by C/VIF1 and C/VIF2. Possible role in the continued mobilization of sucrose to sink organs. Regulates root elongation. The chain is Acid beta-fructofuranosidase 4, vacuolar from Arabidopsis thaliana (Mouse-ear cress).